The sequence spans 1176 residues: Myosin light chain kinase, smooth muscle (1176 aa).

Residues 1 to 41 (MDFRANLQRQVKPKTLSEEERKVHGPQQVDFRSVLAKKGTP) form an actin-binding (calcium/calmodulin-sensitive) region. Residues 1 to 354 (MDFRANLQRQ…SEKRPESRGT (354 aa)) form a disordered region. The tract at residues 26-41 (PQQVDFRSVLAKKGTP) is calmodulin-binding. The segment covering 43–55 (TPVPEKVPPPKPA) has biased composition (pro residues). A run of 16 repeats spans residues 100–111 (FLKPVGNAKLAD), 112–123 (TPKPLSSTKPAE), 124–135 (TPKPLGNVKPAE), 136–147 (TPKPLGSTKPAE), 148–159 (TPKPLGSTKPAE), 160–171 (TPKPLGNVKPAE), 172–183 (TPKPLGNIKPTE), 184–195 (TPKPLGSTKPAE), 196–207 (TPKPLGSTKPAE), 208–219 (TPKPLGNVKPAE), 220–231 (TPKPLGNVKPAE), 232–243 (TPKPLGNVKPAE), 244–255 (TPKPVSNAKPAE), 256–267 (TLKPVGNAKPAE), 268–279 (TPKPLSNVKPAE), and 280–291 (TPKLVGNAKPAE). Positions 100–291 (FLKPVGNAKL…KLVGNAKPAE (192 aa)) are 16 X 12 AA tandem repeats. S202 is modified (phosphoserine). The actin-binding (calcium/calmodulin-insensitive) stretch occupies residues 319–721 (PTGKEELKKE…TVTVNTEQKV (403 aa)). Residues 320–335 (TGKEELKKEIKNDVNC) show a composition bias toward basic and acidic residues. The region spanning 356–444 (PTFEEKLQDL…GQAESSCQVT (89 aa)) is the Ig-like C2-type 1 domain. C377 and C428 are disulfide-bonded. The tract at residues 448–497 (PDAPTSENAKAPEMKARRPKSSLPPVLGTESDATVKKKPAPKTPPKAAMP) is disordered. One can recognise an Ig-like C2-type 2 domain in the interval 498–586 (PQIIQFPEDQ…GSRQAQVNLT (89 aa)). The Fibronectin type-III domain maps to 594 to 686 (PAGTPCASDI…QESELTALGE (93 aa)). The interval 673-707 (SEPSQESELTALGEKPEEEPKDEVEVSDDDEKEPE) is disordered. The segment covering 688 to 706 (PEEEPKDEVEVSDDDEKEP) has biased composition (acidic residues). The residue at position 699 (S699) is a Phosphoserine. Y710 carries the post-translational modification Phosphotyrosine; by ABL1. The Protein kinase domain maps to 725-980 (YDIEERLGSG…CTQCLQHPWL (256 aa)). ATP is bound by residues 731–739 (LGSGKFGQV) and K754. Phosphotyrosine; by ABL1 is present on Y836. D846 acts as the Proton acceptor in catalysis. Position 896 is a phosphotyrosine; by ABL1 (Y896). Residues 972–1035 (TQCLQHPWLM…SGLSGRKSST (64 aa)) are calmodulin-binding. Phosphoserine is present on residues S1020, S1021, S1033, S1034, and S1037. Phosphothreonine is present on T1039. S1040 carries the phosphoserine modification. Residues 1069–1158 (PYFSKTIRDL…GEATCTAELI (90 aa)) enclose the Ig-like C2-type 3 domain. Residues C1090 and C1142 are joined by a disulfide bond.

This sequence belongs to the protein kinase superfamily. CAMK Ser/Thr protein kinase family. As to quaternary structure, all isoforms including Telokin bind calmodulin. Interacts with SVIL. Interacts with CTTN; this interaction is reduced during thrombin-induced endothelial cell (EC) contraction but is promoted by the barrier-protective agonist sphingosine 1-phosphate (S1P) within lamellipodia. A complex made of ABL1, CTTN and MYLK regulates cortical actin-based cytoskeletal rearrangement critical to sphingosine 1-phosphate (S1P)-mediated endothelial cell (EC) barrier enhancement. Binds to NAA10/ARD1 and PTK2B/PYK2. Requires Mg(2+) as cofactor. It depends on Ca(2+) as a cofactor. The C-terminus is deglutamylated by AGTPBP1/CCP1, AGBL1/CCP4 and AGBL4/CCP6, leading to the formation of Myosin light chain kinase, smooth muscle, deglutamylated form. The consequences of C-terminal deglutamylation are unknown. In terms of processing, can probably be down-regulated by phosphorylation. Tyrosine phosphorylation by ABL1 increases kinase activity, reverses MLCK-mediated inhibition of Arp2/3-mediated actin polymerization, and enhances CTTN-binding. Phosphorylation by SRC promotes CTTN binding.

It localises to the cytoplasm. It is found in the cell projection. The protein localises to the lamellipodium. Its subcellular location is the cleavage furrow. The protein resides in the cytoskeleton. It localises to the stress fiber. The enzyme catalyses L-seryl-[myosin light chain] + ATP = O-phospho-L-seryl-[myosin light chain] + ADP + H(+). It carries out the reaction L-threonyl-[myosin light chain] + ATP = O-phospho-L-threonyl-[myosin light chain] + ADP + H(+). Its function is as follows. Calcium/calmodulin-dependent myosin light chain kinase implicated in smooth muscle contraction via phosphorylation of myosin light chains (MLC). Also regulates actin-myosin interaction through a non-kinase activity. Phosphorylates PTK2B/PYK2 and myosin light-chains. Involved in the inflammatory response (e.g. apoptosis, vascular permeability, leukocyte diapedesis), cell motility and morphology, airway hyperreactivity and other activities relevant to asthma. Required for tonic airway smooth muscle contraction that is necessary for physiological and asthmatic airway resistance. Necessary for gastrointestinal motility. Implicated in the regulation of endothelial as well as vascular permeability, probably via the regulation of cytoskeletal rearrangements. In the nervous system it has been shown to control the growth initiation of astrocytic processes in culture and to participate in transmitter release at synapses formed between cultured sympathetic ganglion cells. Critical participant in signaling sequences that result in fibroblast apoptosis. Plays a role in the regulation of epithelial cell survival. Required for epithelial wound healing, especially during actomyosin ring contraction during purse-string wound closure. Mediates RhoA-dependent membrane blebbing. Triggers TRPC5 channel activity in a calcium-dependent signaling, by inducing its subcellular localization at the plasma membrane. Promotes cell migration (including tumor cells) and tumor metastasis. PTK2B/PYK2 activation by phosphorylation mediates ITGB2 activation and is thus essential to trigger neutrophil transmigration during acute lung injury (ALI). May regulate optic nerve head astrocyte migration. Probably involved in mitotic cytoskeletal regulation. Regulates tight junction probably by modulating ZO-1 exchange in the perijunctional actomyosin ring. Mediates burn-induced microvascular barrier injury; triggers endothelial contraction in the development of microvascular hyperpermeability by phosphorylating MLC. Essential for intestinal barrier dysfunction. Mediates Giardia spp.-mediated reduced epithelial barrier function during giardiasis intestinal infection via reorganization of cytoskeletal F-actin and tight junctional ZO-1. Necessary for hypotonicity-induced Ca(2+) entry and subsequent activation of volume-sensitive organic osmolyte/anion channels (VSOAC) in cervical cancer cells. The polypeptide is Myosin light chain kinase, smooth muscle (MYLK) (Bos taurus (Bovine)).